The sequence spans 360 residues: Phospho-N-acetylmuramoyl-pentapeptide-transferase (360 aa).

The next 10 membrane-spanning stretches (helical) occupy residues 24–44 (RAVM…PWTI), 69–89 (GTPT…TLLW), 92–112 (WANP…ALGF), 133–153 (MVWQ…LAAN), 158–178 (ILIV…GFLV), 199–219 (GLAT…AYAS), 239–259 (VVIF…FNAY), 263–283 (VFMG…VAVI), 288–308 (FVLV…MLQV), and 337–357 (QVVV…LSTL).

This sequence belongs to the glycosyltransferase 4 family. MraY subfamily. It depends on Mg(2+) as a cofactor.

It localises to the cell inner membrane. The enzyme catalyses UDP-N-acetyl-alpha-D-muramoyl-L-alanyl-gamma-D-glutamyl-meso-2,6-diaminopimeloyl-D-alanyl-D-alanine + di-trans,octa-cis-undecaprenyl phosphate = di-trans,octa-cis-undecaprenyl diphospho-N-acetyl-alpha-D-muramoyl-L-alanyl-D-glutamyl-meso-2,6-diaminopimeloyl-D-alanyl-D-alanine + UMP. The protein operates within cell wall biogenesis; peptidoglycan biosynthesis. Catalyzes the initial step of the lipid cycle reactions in the biosynthesis of the cell wall peptidoglycan: transfers peptidoglycan precursor phospho-MurNAc-pentapeptide from UDP-MurNAc-pentapeptide onto the lipid carrier undecaprenyl phosphate, yielding undecaprenyl-pyrophosphoryl-MurNAc-pentapeptide, known as lipid I. This is Phospho-N-acetylmuramoyl-pentapeptide-transferase from Neisseria meningitidis serogroup A / serotype 4A (strain DSM 15465 / Z2491).